The sequence spans 317 residues: Melanocyte-stimulating hormone receptor (317 aa).

At Met1–Glu37 the chain is on the extracellular side. The N-linked (GlcNAc...) asparagine glycan is linked to Asn29. Residues Val38–Ile63 form a helical membrane-spanning segment. The Cytoplasmic segment spans residues Ala64–Pro72. Residues Met73–Leu93 traverse the membrane as a helical segment. Residues Glu94–Asn118 are Extracellular-facing. A helical membrane pass occupies residues Val119–Val140. At Asp141 to Arg163 the chain is on the cytoplasmic side. A helical transmembrane segment spans residues Ala164 to Tyr183. The Extracellular segment spans residues Asp184–Cys191. A helical membrane pass occupies residues Leu192 to Leu211. Residues Val212–Ala240 are Cytoplasmic-facing. Residues Ala241–Leu266 traverse the membrane as a helical segment. The Extracellular segment spans residues Cys267 to Asn279. A helical transmembrane segment spans residues Phe280–Phe300. The Cytoplasmic segment spans residues Arg301–Trp317. Cys315 carries the S-palmitoyl cysteine lipid modification.

This sequence belongs to the G-protein coupled receptor 1 family. Interacts with MGRN1, but does not undergo MGRN1-mediated ubiquitination; this interaction competes with GNAS-binding and thus inhibits agonist-induced cAMP production. Interacts with OPN3; the interaction results in a decrease in MC1R-mediated cAMP signaling and ultimately a decrease in melanin production in melanocytes.

It localises to the cell membrane. Receptor for MSH (alpha, beta and gamma) and ACTH. The activity of this receptor is mediated by G proteins which activate adenylate cyclase. Mediates melanogenesis, the production of eumelanin (black/brown) and phaeomelanin (red/yellow), via regulation of cAMP signaling in melanocytes. The polypeptide is Melanocyte-stimulating hormone receptor (MC1R) (Cercopithecus diana (Diana monkey)).